The chain runs to 274 residues: Large ribosomal subunit protein uL2 (274 aa).

2 disordered regions span residues 36–61 and 223–274; these read QKSK…HKQR and VAMN…RRKR. The segment covering 37-46 has biased composition (polar residues); that stretch reads KSKTGGRNSN. 2 stretches are compositionally biased toward basic residues: residues 50–61 and 254–274; these read TTRHRGGGHKQR and KGHK…RRKR.

This sequence belongs to the universal ribosomal protein uL2 family. As to quaternary structure, part of the 50S ribosomal subunit. Forms a bridge to the 30S subunit in the 70S ribosome.

Its function is as follows. One of the primary rRNA binding proteins. Required for association of the 30S and 50S subunits to form the 70S ribosome, for tRNA binding and peptide bond formation. It has been suggested to have peptidyltransferase activity; this is somewhat controversial. Makes several contacts with the 16S rRNA in the 70S ribosome. This Halorhodospira halophila (strain DSM 244 / SL1) (Ectothiorhodospira halophila (strain DSM 244 / SL1)) protein is Large ribosomal subunit protein uL2.